The primary structure comprises 143 residues: Large ribosomal subunit protein uL11 (143 aa).

The protein belongs to the universal ribosomal protein uL11 family. Part of the ribosomal stalk of the 50S ribosomal subunit. Interacts with L10 and the large rRNA to form the base of the stalk. L10 forms an elongated spine to which L12 dimers bind in a sequential fashion forming a multimeric L10(L12)X complex. One or more lysine residues are methylated.

Its function is as follows. Forms part of the ribosomal stalk which helps the ribosome interact with GTP-bound translation factors. The protein is Large ribosomal subunit protein uL11 of Rhizobium etli (strain ATCC 51251 / DSM 11541 / JCM 21823 / NBRC 15573 / CFN 42).